A 223-amino-acid chain; its full sequence is Octanoyltransferase (223 aa).

Positions 31 to 216 constitute a BPL/LPL catalytic domain; it reads GQIGDTLLLL…QIGEVFALEP (186 aa). Substrate is bound by residues 76–83, 145–147, and 159–161; these read RGGEVTYH, AIG, and GLA. Cysteine 177 (acyl-thioester intermediate) is an active-site residue.

It belongs to the LipB family.

It localises to the cytoplasm. The enzyme catalyses octanoyl-[ACP] + L-lysyl-[protein] = N(6)-octanoyl-L-lysyl-[protein] + holo-[ACP] + H(+). Its pathway is protein modification; protein lipoylation via endogenous pathway; protein N(6)-(lipoyl)lysine from octanoyl-[acyl-carrier-protein]: step 1/2. In terms of biological role, catalyzes the transfer of endogenously produced octanoic acid from octanoyl-acyl-carrier-protein onto the lipoyl domains of lipoate-dependent enzymes. Lipoyl-ACP can also act as a substrate although octanoyl-ACP is likely to be the physiological substrate. The chain is Octanoyltransferase from Chloroflexus aurantiacus (strain ATCC 29366 / DSM 635 / J-10-fl).